A 554-amino-acid chain; its full sequence is Arginine--tRNA ligase (554 aa).

Positions 130-140 (ANPTGDLHIGH) match the 'HIGH' region motif.

This sequence belongs to the class-I aminoacyl-tRNA synthetase family. In terms of assembly, monomer.

The protein resides in the cytoplasm. The catalysed reaction is tRNA(Arg) + L-arginine + ATP = L-arginyl-tRNA(Arg) + AMP + diphosphate. This is Arginine--tRNA ligase from Staphylococcus carnosus (strain TM300).